Consider the following 98-residue polypeptide: Large ribosomal subunit protein bL28 (98 aa).

The protein belongs to the bacterial ribosomal protein bL28 family.

The protein is Large ribosomal subunit protein bL28 of Beijerinckia indica subsp. indica (strain ATCC 9039 / DSM 1715 / NCIMB 8712).